The primary structure comprises 305 residues: Major fimbrium anchoring subunit FimB (305 aa).

The N-terminal stretch at 1 to 22 (MNDAKKYIVSVLILLVAGMFGG) is a signal peptide. Residue Cys23 is the site of N-palmitoyl cysteine attachment. Cys23 carries the S-diacylglycerol cysteine lipid modification.

This sequence belongs to the bacteroidetes fimbrillin superfamily. FimB/Mfa2 family. As to quaternary structure, fimB is not part of the fimbrium itself, but anchors the fimbrium in the outer membrane. Linear, head-to-tail oligomerization of fimbrial subunits mediates assembly of the fimbrium stalk, while the minor components FimC, FimD and FimE probably form the fimbrium tip. The anchoring subunit FimB limits fimbrium length and is important for solid fimbrium attachment to the outer membrane. In its absence, the major fimbriae become very long and are easily detached from the membrane.

The protein localises to the cell outer membrane. Its function is as follows. Anchoring subunit of the major fimbriae. Regulates fimbrial length. These filamentous pili are attached to the cell surface; they mediate biofilm formation, adhesion onto host cells and onto other bacteria that are part of the oral microbiome. Fimbriae of P.gingivalis are major virulence factors. This is Major fimbrium anchoring subunit FimB from Porphyromonas gingivalis (Bacteroides gingivalis).